A 344-amino-acid polypeptide reads, in one-letter code: Protein pelota homolog (344 aa).

Belongs to the eukaryotic release factor 1 family. Pelota subfamily. Monomer. A divalent metal cation is required as a cofactor.

It is found in the cytoplasm. Functionally, may function in recognizing stalled ribosomes, interact with stem-loop structures in stalled mRNA molecules, and effect endonucleolytic cleavage of the mRNA. May play a role in the release non-functional ribosomes and degradation of damaged mRNAs. Has endoribonuclease activity. The polypeptide is Protein pelota homolog (Saccharolobus islandicus (strain M.14.25 / Kamchatka #1) (Sulfolobus islandicus)).